We begin with the raw amino-acid sequence, 427 residues long: MQLTPLHIQGGRNLSGEIAIQPSKNAALPIIVASLLSSEPVTLHGVPRLSDVYTILELAHHIGTRHVWTGPNSLTLHTPEILNTDAPYALVSKMRASFIMMGALLARAGEATVSMPGGCAFGYRPVDQHVKAFRALGVHIVEEGGNFEARREGSLNGAFVFELLTVGGTQNAILASVLGDGVVTLENASIDTDVVDLINFLNSLGAQIQGGGTNTLTIRGVRALRGGEYRIIPDRIEAGTFMIAAAATRSRLTLTNVRPDHLRAVSSKLMEMGVDILETEGRLIVDARDRELKPVNVTTQSFPGFPTDVQPQMSALLATVPGTSVVQDPVYPDRLTHVAELHRMGANITVSGYTQVIQGGTLHAAPVKAADLRAGAALFIAALTTEGETVIEGVQYLNRGYERLAERLRSIGANAWQPQPVLASAMD.

Lysine 24 to asparagine 25 provides a ligand contact to phosphoenolpyruvate. UDP-N-acetyl-alpha-D-glucosamine is bound at residue arginine 95. Catalysis depends on cysteine 119, which acts as the Proton donor. A 2-(S-cysteinyl)pyruvic acid O-phosphothioketal modification is found at cysteine 119. Residues arginine 124 to glutamine 128, aspartate 308, and valine 330 contribute to the UDP-N-acetyl-alpha-D-glucosamine site.

The protein belongs to the EPSP synthase family. MurA subfamily.

The protein localises to the cytoplasm. The enzyme catalyses phosphoenolpyruvate + UDP-N-acetyl-alpha-D-glucosamine = UDP-N-acetyl-3-O-(1-carboxyvinyl)-alpha-D-glucosamine + phosphate. It participates in cell wall biogenesis; peptidoglycan biosynthesis. Functionally, cell wall formation. Adds enolpyruvyl to UDP-N-acetylglucosamine. The chain is UDP-N-acetylglucosamine 1-carboxyvinyltransferase from Deinococcus geothermalis (strain DSM 11300 / CIP 105573 / AG-3a).